The primary structure comprises 490 residues: Subtilisin-like protease 8 (490 aa).

A signal peptide spans 1 to 26; the sequence is MKGLLSLSVLPVLAYASPMIVDSIHQ. The propeptide occupies 27–134; that stretch reads NAAPILSSTN…YIERDSEVHT (108 aa). The region spanning 43 to 134 is the Inhibitor I9 domain; it reads SYIVVFKKGV…YIERDSEVHT (92 aa). The region spanning 144-450 is the Peptidase S8 domain; sequence PWGLARISHR…GGSDDYKKII (307 aa). Catalysis depends on charge relay system residues Asp-180 and His-212. Asn-282 carries N-linked (GlcNAc...) asparagine glycosylation. Ser-378 functions as the Charge relay system in the catalytic mechanism. N-linked (GlcNAc...) asparagine glycosylation is present at Asn-456.

Belongs to the peptidase S8 family.

The protein resides in the secreted. Its function is as follows. Secreted subtilisin-like serine protease with keratinolytic activity that contributes to pathogenicity. In Arthroderma benhamiae (strain ATCC MYA-4681 / CBS 112371) (Trichophyton mentagrophytes), this protein is Subtilisin-like protease 8 (SUB8).